The following is a 225-amino-acid chain: MRIVFDIGGSVLVPDDPDIDFIKAIAYELTKISEDHEVAVVVGGGKVARKYIKAAKTFTPNETFKDYIGIHITRANAMLLIAALGEKAYPFVVQDFRKAWEVIQLKKIPIMGGTHPGHTTDAVAALLAEYLQADLLIVVTNVDGVYDSDPRKNPNAKKLDRITVDQLVDIAMEGESKAGGSGVVDALAAKFIQRGKIRTYIVGKKDAYSLFDVIKGKHSGTVVEP.

9–10 (GS) is a binding site for ATP. Gly-44 is a binding site for UMP. Residues Gly-45 and Arg-49 each contribute to the ATP site. Residues Asp-66 and 114–120 (THPGHTT) each bind UMP. ATP contacts are provided by Thr-140, Asn-141, Tyr-146, and Asp-149.

The protein belongs to the UMP kinase family. Homohexamer.

The protein resides in the cytoplasm. It catalyses the reaction UMP + ATP = UDP + ADP. It participates in pyrimidine metabolism; CTP biosynthesis via de novo pathway; UDP from UMP (UMPK route): step 1/1. Its activity is regulated as follows. Inhibited by UTP. Functionally, catalyzes the reversible phosphorylation of UMP to UDP. The sequence is that of Uridylate kinase from Thermococcus onnurineus (strain NA1).